A 305-amino-acid chain; its full sequence is MGHALCVCSRGTVIIDNKRYLFIQKLGEGGFSYVDLVEGLHDGHFYALKRILCHEQQDREEAQREADMHRLFNHPNILRLVAYCLRERGAKHEAWLLLPFFKRGTLWNEIERLKDKGNFLTEDQILWLLLGICRGLEAIHAKGYAHRDLKPTNILLGDEGQPVLMDLGSMNQACIHVEGSRQALTLQDWAAQRCTISYRAPELFSVQSHCVIDERTDVWSLGCVLYAMMFGEGPYDMVFQKGDSVALAVQNQLSIPQSPRHSSALRQLLNSMMTVDPHQRPHIPLLLSQLEALQPPAPGQHTTQI.

Glycine 2 carries the N-myristoyl glycine lipid modification. Residues cysteine 6 and cysteine 8 are each lipidated (S-palmitoyl cysteine). Residues 20–293 (YLFIQKLGEG…PLLLSQLEAL (274 aa)) enclose the Protein kinase domain. Residues 26 to 34 (LGEGGFSYV) and lysine 49 each bind ATP. Catalysis depends on aspartate 148, which acts as the Proton acceptor. Residues 166-202 (DLGSMNQACIHVEGSRQALTLQDWAAQRCTISYRAPE) are activation loop. Threonine 185 carries the phosphothreonine; by autocatalysis modification. A Phosphoserine; by autocatalysis modification is found at serine 197. Tyrosine 198 bears the Phosphotyrosine; by autocatalysis mark.

The protein belongs to the protein kinase superfamily. Ser/Thr protein kinase family. In terms of assembly, monomer. Interacts with DRG1 (via its N-terminal); the interaction phosphorylates DRG1. Post-translationally, mainly autophosphorylated on serine/threonine residues. Also autophosphorylated on Tyr-198. It is uncertain whether palmitoylation is on Cys-6 and/or Cys-8. In terms of tissue distribution, ubiquitously expressed at very low levels.

It localises to the cytoplasm. Its subcellular location is the perinuclear region. The protein resides in the membrane. The enzyme catalyses L-seryl-[protein] + ATP = O-phospho-L-seryl-[protein] + ADP + H(+). It carries out the reaction L-threonyl-[protein] + ATP = O-phospho-L-threonyl-[protein] + ADP + H(+). The catalysed reaction is L-tyrosyl-[protein] + ATP = O-phospho-L-tyrosyl-[protein] + ADP + H(+). Functionally, membrane-associated protein kinase that phosphorylates on serine and threonine residues. In vitro substrates include DRG1, ENO1 and EIF4EBP1. Also autophosphorylates. May be involved in secretory vesicle trafficking or intracellular signaling. May have a role in regulating stromal-epithelial interactions that occur during ductal morphogenesis in the mammary gland. May be involved in TGF-beta signaling. Able to autophosphorylate on Tyr residue; it is however unclear whether it has tyrosine-protein kinase toward other proteins. The protein is Serine/threonine-protein kinase 16 (STK16) of Homo sapiens (Human).